We begin with the raw amino-acid sequence, 240 residues long: UDP-2,3-diacylglucosamine hydrolase (240 aa).

Positions 8, 10, 41, 79, and 114 each coordinate Mn(2+). 79–80 is a binding site for substrate; the sequence is NR. Residues aspartate 122, serine 160, asparagine 164, lysine 167, and histidine 195 each coordinate substrate. Mn(2+) contacts are provided by histidine 195 and histidine 197.

Belongs to the LpxH family. Mn(2+) serves as cofactor.

The protein localises to the cell inner membrane. The catalysed reaction is UDP-2-N,3-O-bis[(3R)-3-hydroxytetradecanoyl]-alpha-D-glucosamine + H2O = 2-N,3-O-bis[(3R)-3-hydroxytetradecanoyl]-alpha-D-glucosaminyl 1-phosphate + UMP + 2 H(+). It participates in glycolipid biosynthesis; lipid IV(A) biosynthesis; lipid IV(A) from (3R)-3-hydroxytetradecanoyl-[acyl-carrier-protein] and UDP-N-acetyl-alpha-D-glucosamine: step 4/6. In terms of biological role, hydrolyzes the pyrophosphate bond of UDP-2,3-diacylglucosamine to yield 2,3-diacylglucosamine 1-phosphate (lipid X) and UMP by catalyzing the attack of water at the alpha-P atom. Involved in the biosynthesis of lipid A, a phosphorylated glycolipid that anchors the lipopolysaccharide to the outer membrane of the cell. The protein is UDP-2,3-diacylglucosamine hydrolase of Salmonella newport (strain SL254).